The primary structure comprises 494 residues: Probable malate:quinone oxidoreductase (494 aa).

It belongs to the MQO family. It depends on FAD as a cofactor.

It carries out the reaction (S)-malate + a quinone = a quinol + oxaloacetate. Its pathway is carbohydrate metabolism; tricarboxylic acid cycle; oxaloacetate from (S)-malate (quinone route): step 1/1. In Helicobacter hepaticus (strain ATCC 51449 / 3B1), this protein is Probable malate:quinone oxidoreductase.